We begin with the raw amino-acid sequence, 197 residues long: GTP cyclohydrolase 1 (197 aa).

Residues cysteine 88, histidine 91, and cysteine 160 each coordinate Zn(2+).

The protein belongs to the GTP cyclohydrolase I family. Homomer.

It catalyses the reaction GTP + H2O = 7,8-dihydroneopterin 3'-triphosphate + formate + H(+). It functions in the pathway cofactor biosynthesis; 7,8-dihydroneopterin triphosphate biosynthesis; 7,8-dihydroneopterin triphosphate from GTP: step 1/1. The polypeptide is GTP cyclohydrolase 1 (Clostridium beijerinckii (strain ATCC 51743 / NCIMB 8052) (Clostridium acetobutylicum)).